A 201-amino-acid chain; its full sequence is Probable molybdenum cofactor guanylyltransferase (201 aa).

GTP contacts are provided by residues 6–8, Lys-18, Asp-67, and Asp-92; that span reads LAG. Asp-92 is a Mg(2+) binding site.

This sequence belongs to the MobA family. Mg(2+) is required as a cofactor.

It localises to the cytoplasm. The enzyme catalyses Mo-molybdopterin + GTP + H(+) = Mo-molybdopterin guanine dinucleotide + diphosphate. Transfers a GMP moiety from GTP to Mo-molybdopterin (Mo-MPT) cofactor (Moco or molybdenum cofactor) to form Mo-molybdopterin guanine dinucleotide (Mo-MGD) cofactor. This Thermococcus kodakarensis (strain ATCC BAA-918 / JCM 12380 / KOD1) (Pyrococcus kodakaraensis (strain KOD1)) protein is Probable molybdenum cofactor guanylyltransferase.